A 63-amino-acid chain; its full sequence is Large ribosomal subunit protein bL28 (63 aa).

It belongs to the bacterial ribosomal protein bL28 family.

In Clostridium botulinum (strain ATCC 19397 / Type A), this protein is Large ribosomal subunit protein bL28.